The sequence spans 453 residues: MSNISSIVNRARDAFNSGKTRPLQFRVEQLEALQRMINENLKGISKALASNLRKNEWTSYYEEVAHVLDEIDFTIKGLSDWAEDEPVAKTRQTQEDDLYIHSEPLGVVLVIGAWNYPFNLTIQPMVGAIAAGNAVVLKPSEVSDHMADLLSTLIPQYMDKDLYPVIKGGVPETTELLKEKFDHIMYTGSTAVGKIVMAAAAKHLTPVTLELGGKSPCYVDKDCDLDVACRRIAWGKFMNSGQTCVAPDYILCDPSIQNEIVEKLKKSLKDFYGEDAKQSHDYGRIINDRHFQRVINLIDSKKVAHGGTWDQPSRYIAPTILVDVDPQSPVMQEEIFGPVMPIVCVRSLDEAIKFINQREKPLALYVFSNNDKVIKKMIAETSSGGVTANDVIVHITVPTLPFGGVGNSGMGAYHGKKSFETFSHRRSCLVRSLRNEEANKARYPPSPAKMPRH.

N-acetylserine is present on Ser2. Residue Lys178 is modified to N6-acetyllysine. 188–193 (GSTAVG) is a binding site for NAD(+). Lys194 carries the post-translational modification N6-acetyllysine. Active-site residues include Glu210 and Cys244.

Belongs to the aldehyde dehydrogenase family. In terms of assembly, homodimer. Constitutively expressed in cornea, stomach, skin, bladder and lungs. Lowest expression levels in lungs and bladder.

Its subcellular location is the cytoplasm. The catalysed reaction is an aldehyde + NAD(+) + H2O = a carboxylate + NADH + 2 H(+). The enzyme catalyses octanal + NAD(+) + H2O = octanoate + NADH + 2 H(+). Its function is as follows. ALDHs play a major role in the detoxification of alcohol-derived acetaldehyde. They are involved in the metabolism of corticosteroids, biogenic amines, neurotransmitters, and lipid peroxidation. Oxidizes medium and long chain aldehydes into non-toxic fatty acids. Preferentially oxidizes aromatic aldehyde substrates. Comprises about 50 percent of corneal epithelial soluble proteins. May play a role in preventing corneal damage caused by ultraviolet light. This is Aldehyde dehydrogenase, dimeric NADP-preferring (Aldh3a1) from Mus musculus (Mouse).